The sequence spans 340 residues: Adenosine deaminase (340 aa).

Residues histidine 15 and histidine 17 each contribute to the Zn(2+) site. Residues histidine 17, aspartate 19, and glycine 172 each coordinate substrate. Residue histidine 199 coordinates Zn(2+). Glutamate 202 (proton donor) is an active-site residue. Aspartate 279 serves as a coordination point for Zn(2+).

The protein belongs to the metallo-dependent hydrolases superfamily. Adenosine and AMP deaminases family. Adenosine deaminase subfamily. The cofactor is Zn(2+).

The catalysed reaction is adenosine + H2O + H(+) = inosine + NH4(+). The enzyme catalyses 2'-deoxyadenosine + H2O + H(+) = 2'-deoxyinosine + NH4(+). Functionally, catalyzes the hydrolytic deamination of adenosine and 2-deoxyadenosine. The chain is Adenosine deaminase from Streptococcus agalactiae serotype Ia (strain ATCC 27591 / A909 / CDC SS700).